Reading from the N-terminus, the 174-residue chain is Crossover junction endodeoxyribonuclease RuvC (174 aa).

Catalysis depends on residues Asp-8, Glu-67, and Asp-139. Mg(2+) contacts are provided by Asp-8, Glu-67, and Asp-139.

This sequence belongs to the RuvC family. As to quaternary structure, homodimer which binds Holliday junction (HJ) DNA. The HJ becomes 2-fold symmetrical on binding to RuvC with unstacked arms; it has a different conformation from HJ DNA in complex with RuvA. In the full resolvosome a probable DNA-RuvA(4)-RuvB(12)-RuvC(2) complex forms which resolves the HJ. Mg(2+) is required as a cofactor.

It localises to the cytoplasm. It catalyses the reaction Endonucleolytic cleavage at a junction such as a reciprocal single-stranded crossover between two homologous DNA duplexes (Holliday junction).. Functionally, the RuvA-RuvB-RuvC complex processes Holliday junction (HJ) DNA during genetic recombination and DNA repair. Endonuclease that resolves HJ intermediates. Cleaves cruciform DNA by making single-stranded nicks across the HJ at symmetrical positions within the homologous arms, yielding a 5'-phosphate and a 3'-hydroxyl group; requires a central core of homology in the junction. The consensus cleavage sequence is 5'-(A/T)TT(C/G)-3'. Cleavage occurs on the 3'-side of the TT dinucleotide at the point of strand exchange. HJ branch migration catalyzed by RuvA-RuvB allows RuvC to scan DNA until it finds its consensus sequence, where it cleaves and resolves the cruciform DNA. The protein is Crossover junction endodeoxyribonuclease RuvC of Pseudomonas savastanoi pv. phaseolicola (strain 1448A / Race 6) (Pseudomonas syringae pv. phaseolicola (strain 1448A / Race 6)).